Here is a 324-residue protein sequence, read N- to C-terminus: MSGSGDREILLIAHPGRAEIVETAHRAAKIFTEAGIGLRVLADEAPSTRFDSRAEPAPVTGPAGDAVRVVEHSAAAAVGCEMVLALGGDGTFLRAAELARPASVPVLGINLGRIGFLTEAEAEHLDEALGQVVRGDYRVEDRMTIDVTVRVEDEVVESGWALNEASIENASRMGVLEVVLEVDGRPVSAFGCDGILIATPTGSTAYAFSAGGPVVWPELEALLVIPSNAHALFARPLVTSPESRIAVESVATGHDAIVFLDGRRTLALPRGGRVEAVRGSEPVRWVRLDSAPFADRMVRKFQLPVTGWRGRRRTESTRADRDQD.

The active-site Proton acceptor is D89. Residues 89–90, R94, 163–164, D193, and 204–209 each bind NAD(+); these read DG, NE, and TAYAFS.

Belongs to the NAD kinase family. A divalent metal cation is required as a cofactor.

It is found in the cytoplasm. It catalyses the reaction NAD(+) + ATP = ADP + NADP(+) + H(+). Involved in the regulation of the intracellular balance of NAD and NADP, and is a key enzyme in the biosynthesis of NADP. Catalyzes specifically the phosphorylation on 2'-hydroxyl of the adenosine moiety of NAD to yield NADP. This chain is NAD kinase, found in Nocardia farcinica (strain IFM 10152).